Consider the following 204-residue polypeptide: MAEISVADIRKLRELTGAGMSDVKKALVDNAGDFEKAKSWLREKGKAQVAKRAARSAANGLVESYLHRTDPQLPPTLGVLVELRCETDFVAKTEDFKQLARDLAQHIAAADPLYVTAEQIPNEVLEAERKIYEAAAREEGKPEQAIAKIVEGRVNGYVKSSVLLDQPWVKDGKVTIRALLDQAGASLGEKIEVGRFSRFNIRQA.

Residues 87–90 (TDFV) are involved in Mg(2+) ion dislocation from EF-Tu.

This sequence belongs to the EF-Ts family.

It localises to the cytoplasm. In terms of biological role, associates with the EF-Tu.GDP complex and induces the exchange of GDP to GTP. It remains bound to the aminoacyl-tRNA.EF-Tu.GTP complex up to the GTP hydrolysis stage on the ribosome. The sequence is that of Elongation factor Ts from Frankia casuarinae (strain DSM 45818 / CECT 9043 / HFP020203 / CcI3).